Reading from the N-terminus, the 874-residue chain is Alanine--tRNA ligase (874 aa).

Residues H562, H566, C664, and H668 each contribute to the Zn(2+) site.

Belongs to the class-II aminoacyl-tRNA synthetase family. It depends on Zn(2+) as a cofactor.

The protein localises to the cytoplasm. The enzyme catalyses tRNA(Ala) + L-alanine + ATP = L-alanyl-tRNA(Ala) + AMP + diphosphate. In terms of biological role, catalyzes the attachment of alanine to tRNA(Ala) in a two-step reaction: alanine is first activated by ATP to form Ala-AMP and then transferred to the acceptor end of tRNA(Ala). Also edits incorrectly charged Ser-tRNA(Ala) and Gly-tRNA(Ala) via its editing domain. This is Alanine--tRNA ligase from Neisseria meningitidis serogroup B (strain ATCC BAA-335 / MC58).